The chain runs to 551 residues: Interleukin-2 receptor subunit beta (551 aa).

Positions 1–26 are cleaved as a signal peptide; sequence MAAPALSWRLPLLILLLPLATSWASA. Over 27–240 the chain is Extracellular; that stretch reads AVNGTSQFTC…TKPAALGKDT (214 aa). 3 N-linked (GlcNAc...) asparagine glycosylation sites follow: Asn29, Asn43, and Asn71. 3 disulfides stabilise this stretch: Cys36–Cys46, Cys59–Cys110, and Cys74–Cys86. The region spanning 134–234 is the Fibronectin type-III domain; that stretch reads APISLQVVHV…QPLAFRTKPA (101 aa). The N-linked (GlcNAc...) asparagine glycan is linked to Asn149. The short motif at 220–224 is the WSXWS motif element; it reads WSPWS. A helical transmembrane segment spans residues 241-265; that stretch reads IPWLGHLLVGLSGAFGFIILVYLLI. Over 266–551 the chain is Cytoplasmic; it reads NCRNTGPWLK…LQGQDPTHLV (286 aa). Positions 278-286 match the Box 1 motif motif; sequence LKCNTPDPS. 2 disordered regions span residues 389–416 and 432–486; these read EEDP…GEDD and PSLL…VDFQ.

This sequence belongs to the type I cytokine receptor family. Type 4 subfamily. As to quaternary structure, non-covalent dimer of an alpha and a beta subunit. IL2R exists in 3 different forms: a high affinity dimer, an intermediate affinity monomer (beta subunit), and a low affinity monomer (alpha subunit). The high and intermediate affinity forms also associate with a gamma subunit. Interacts with SHB upon interleukin stimulation. (Microbial infection) Interacts with HTLV-1 accessory protein p12I.

It is found in the cell membrane. Its function is as follows. Receptor for interleukin-2. This beta subunit is involved in receptor mediated endocytosis and transduces the mitogenic signals of IL2. Probably in association with IL15RA, involved in the stimulation of neutrophil phagocytosis by IL15. The sequence is that of Interleukin-2 receptor subunit beta from Homo sapiens (Human).